The primary structure comprises 66 residues: Large ribosomal subunit protein uL29 (66 aa).

The protein belongs to the universal ribosomal protein uL29 family.

This chain is Large ribosomal subunit protein uL29, found in Borrelia garinii subsp. bavariensis (strain ATCC BAA-2496 / DSM 23469 / PBi) (Borreliella bavariensis).